The chain runs to 312 residues: Transcription initiation factor IIB-2 (312 aa).

Residues 2-34 form a TFIIB-type zinc finger; sequence SDAFCSDCKRHTEVVFDHSAGDTVCSECGLVLE. Residues Cys6, Cys9, Cys26, and Cys29 each coordinate Zn(2+). 2 repeat units span residues 115 to 192 and 216 to 290.

The protein belongs to the TFIIB family. Associates with TFIID-IIA (DA complex) to form TFIID-IIA-IIB (DAB-complex) which is then recognized by polymerase II.

The protein resides in the nucleus. General factor that plays a major role in the activation of eukaryotic genes transcribed by RNA polymerase II. The sequence is that of Transcription initiation factor IIB-2 (TFIIB2) from Arabidopsis thaliana (Mouse-ear cress).